A 449-amino-acid chain; its full sequence is XK-related protein 2 (449 aa).

A run of 10 helical transmembrane segments spans residues phenylalanine 35–valine 55, threonine 68–valine 88, leucine 98–isoleucine 118, isoleucine 174–serine 194, leucine 204–isoleucine 224, leucine 241–phenylalanine 261, alanine 269–tryptophan 289, valine 306–cysteine 326, leucine 357–asparagine 377, and leucine 382–phenylalanine 402.

This sequence belongs to the XK family.

Its subcellular location is the membrane. This chain is XK-related protein 2 (Xkrx), found in Mus musculus (Mouse).